The sequence spans 37 residues: Cytochrome b6-f complex subunit 5 (37 aa).

The chain crosses the membrane as a helical span at residues 5–25 (LLSGIVLGLIPITLVGLFVTA).

It belongs to the PetG family. In terms of assembly, the 4 large subunits of the cytochrome b6-f complex are cytochrome b6, subunit IV (17 kDa polypeptide, PetD), cytochrome f and the Rieske protein, while the 4 small subunits are PetG, PetL, PetM and PetN. The complex functions as a dimer.

The protein localises to the plastid. It localises to the chloroplast thylakoid membrane. In terms of biological role, component of the cytochrome b6-f complex, which mediates electron transfer between photosystem II (PSII) and photosystem I (PSI), cyclic electron flow around PSI, and state transitions. PetG is required for either the stability or assembly of the cytochrome b6-f complex. This Welwitschia mirabilis (Tree tumbo) protein is Cytochrome b6-f complex subunit 5.